The following is a 250-amino-acid chain: Probable transcriptional regulatory protein DIP1378 (250 aa).

A disordered region spans residues 1-22 (MSGHSKWATTKHKKAANDAKRG).

The protein belongs to the TACO1 family.

It is found in the cytoplasm. The chain is Probable transcriptional regulatory protein DIP1378 from Corynebacterium diphtheriae (strain ATCC 700971 / NCTC 13129 / Biotype gravis).